Here is a 129-residue protein sequence, read N- to C-terminus: Replication initiation control protein YabA (129 aa).

Residues histidine 103, cysteine 105, cysteine 119, and cysteine 122 each coordinate Zn(2+).

It belongs to the YabA family. In terms of assembly, homotetramer. Interacts with both DnaA and DnaN, acting as a bridge between these two proteins. Requires Zn(2+) as cofactor.

The protein resides in the cytoplasm. Its subcellular location is the nucleoid. Its function is as follows. Involved in control of chromosome replication initiation. Inhibits the cooperative binding of DnaA to the oriC region, thus negatively regulating initiation of chromosome replication. Inhibits the ability of DnaA-ATP to form a helix on DNA; does not disassemble preformed DnaA-DNA helices. Decreases the residence time of DnaA on the chromosome at its binding sites (oriC, replication forks and promoter-binding sites). Tethers DnaA to the replication machinery via the DNA polymerase beta sliding clamp subunit (dnaN). Associates with oriC and other DnaA targets on the chromosome in a DnaA-dependent manner. This is Replication initiation control protein YabA from Listeria monocytogenes serotype 4b (strain CLIP80459).